A 185-amino-acid chain; its full sequence is Elongation factor P (185 aa).

This sequence belongs to the elongation factor P family.

The protein localises to the cytoplasm. It functions in the pathway protein biosynthesis; polypeptide chain elongation. Involved in peptide bond synthesis. Stimulates efficient translation and peptide-bond synthesis on native or reconstituted 70S ribosomes in vitro. Probably functions indirectly by altering the affinity of the ribosome for aminoacyl-tRNA, thus increasing their reactivity as acceptors for peptidyl transferase. In Lactococcus lactis subsp. lactis (strain IL1403) (Streptococcus lactis), this protein is Elongation factor P (efp).